Consider the following 184-residue polypeptide: Fruit protein pKIWI501 (184 aa).

Residues 1–184 (MATVEVTPAV…TEVPVDKTEE (184 aa)) form a disordered region. Composition is skewed to low complexity over residues 25–36 (PQEPQPEAAVAA) and 53–65 (PEAV…PAAT). Acidic residues predominate over residues 72-92 (EVAEAEEEVVEEPQEVPEEPV). A compositionally biased stretch (basic and acidic residues) spans 96 to 119 (AAKEVEATEGKAEPTGEMKDKTPE). Over residues 120–156 (ATDAPEAPAAAEEPTDAPEAPAVAEEPTNAPEAPAVG) the composition is skewed to low complexity. Over residues 159 to 168 (PEAKEGKPDE) the composition is skewed to basic and acidic residues.

To H.brasiliensis latex allergen Hev b 5.

In Actinidia deliciosa (Kiwi), this protein is Fruit protein pKIWI501.